The chain runs to 117 residues: Iron-sulfur cluster insertion protein ErpA (117 aa).

Cys45, Cys109, and Cys111 together coordinate iron-sulfur cluster.

It belongs to the HesB/IscA family. In terms of assembly, homodimer. Requires iron-sulfur cluster as cofactor.

In terms of biological role, required for insertion of 4Fe-4S clusters for at least IspG. The protein is Iron-sulfur cluster insertion protein ErpA of Hahella chejuensis (strain KCTC 2396).